We begin with the raw amino-acid sequence, 361 residues long: MASGKLPWELEEEILCRLPPGSLVRLRSVCKHWNDLYNDKWFIKKSLGFARPQFIILAGFKIYSIGTIGLDVVDPKIEAEKWAFTRITACNGLLFRDFWNQGVTIWNPWLRQVGWIEYKEDKDFRFCGIGYDAGKPEKGYKIFGYFNRFYDTKLKIGHRFAIFECASQAFKFIDSPEWPTLAGRGEYVSLNGNLYWTAYNEDTREHFLGSFDFSTEISMHFCLLPCAKHVSGLQDKLVLTVFKGDRFALLKQSRISSNTEIWVTKDKINSSNNVVWLNLMTLSIPDFPSLFHQLSDISYFIHDMTLILCCDDNQTGVGCIFIARGDLCKKIQINYVSLGFSQCVYLPSLTSVPLEFRSLQV.

Residues 1–46 (MASGKLPWELEEEILCRLPPGSLVRLRSVCKHWNDLYNDKWFIKKS) enclose the F-box domain.

In Arabidopsis thaliana (Mouse-ear cress), this protein is Putative F-box protein At3g18340.